A 635-amino-acid chain; its full sequence is 1-deoxy-D-xylulose-5-phosphate synthase (635 aa).

Residues His-72 and 113–115 (GHA) contribute to the thiamine diphosphate site. Asp-144 contacts Mg(2+). Thiamine diphosphate contacts are provided by residues 145 to 146 (GA), Asn-174, Tyr-286, and Glu-369. Asn-174 provides a ligand contact to Mg(2+).

It belongs to the transketolase family. DXPS subfamily. In terms of assembly, homodimer. Mg(2+) serves as cofactor. The cofactor is thiamine diphosphate.

The enzyme catalyses D-glyceraldehyde 3-phosphate + pyruvate + H(+) = 1-deoxy-D-xylulose 5-phosphate + CO2. It participates in metabolic intermediate biosynthesis; 1-deoxy-D-xylulose 5-phosphate biosynthesis; 1-deoxy-D-xylulose 5-phosphate from D-glyceraldehyde 3-phosphate and pyruvate: step 1/1. Functionally, catalyzes the acyloin condensation reaction between C atoms 2 and 3 of pyruvate and glyceraldehyde 3-phosphate to yield 1-deoxy-D-xylulose-5-phosphate (DXP). The polypeptide is 1-deoxy-D-xylulose-5-phosphate synthase (Acaryochloris marina (strain MBIC 11017)).